The following is a 1220-amino-acid chain: Myosin-2 (1220 aa).

Positions methionine 1–lysine 12 are enriched in polar residues. Disordered regions lie at residues methionine 1 to serine 54 and glutamine 68 to lysine 95. Positions glutamate 20–aspartate 33 are enriched in basic and acidic residues. Residues serine 40–serine 54 show a composition bias toward low complexity. The span at glutamate 82–lysine 95 shows a compositional bias: basic and acidic residues. The region spanning lysine 160 to proline 209 is the Myosin N-terminal SH3-like domain. Residues glutamate 213 to lysine 879 form the Myosin motor domain. Residues glycine 304–threonine 311 and asparagine 353–lysine 361 contribute to the ATP site. Actin-binding stretches follow at residues leucine 638–leucine 672 and leucine 759–serine 781. 3 consecutive IQ domains span residues valine 881–valine 910, methionine 904–aspartate 933, and glutamate 942–leucine 971. Disordered stretches follow at residues glutamine 968–leucine 1007 and serine 1075–threonine 1118. Polar residues-rich tracts occupy residues proline 997 to aspartate 1006 and threonine 1098 to threonine 1118. The stretch at serine 1003–leucine 1071 forms a coiled coil.

Belongs to the TRAFAC class myosin-kinesin ATPase superfamily. Myosin family. Plant myosin class VIII subfamily. As to quaternary structure, homodimer. Expressed in flowers, leaves and roots.

The protein resides in the cell junction. The protein localises to the plasmodesma. Its subcellular location is the endosome. Functionally, myosin heavy chain that is required for the cell cycle-regulated transport of various organelles and proteins for their segregation. Functions by binding with its tail domain to receptor proteins on organelles and exerting force with its N-terminal motor domain against actin filaments, thereby transporting its cargo along polarized actin cables. Involved in endocytosis via its action in endosomal trafficking. In Arabidopsis thaliana (Mouse-ear cress), this protein is Myosin-2 (VIII-2).